Consider the following 406-residue polypeptide: Synaptic vesicle membrane protein VAT-1 homolog (406 aa).

Positions 1–57 (MSAEREAAEAATVAAATEAGAETGTGAGEGAPSQPPTVEVASDPQPPPAPEASASAS) are disordered. Ser2 is modified (N-acetylserine). A Phosphoserine modification is found at Ser2. Residues 9–22 (EAATVAAATEAGAE) show a composition bias toward low complexity. Residues Ser33 and Ser42 each carry the phosphoserine modification.

It belongs to the zinc-containing alcohol dehydrogenase family. Quinone oxidoreductase subfamily.

It localises to the cytoplasm. Its subcellular location is the mitochondrion outer membrane. Its function is as follows. Plays a part in calcium-regulated keratinocyte activation in epidermal repair mechanisms. Has no effect on cell proliferation. Possesses ATPase activity. Negatively regulates mitochondrial fusion in cooperation with mitofusin proteins (MFN1-2). The sequence is that of Synaptic vesicle membrane protein VAT-1 homolog (Vat1) from Mus musculus (Mouse).